The following is a 425-amino-acid chain: Serine--tRNA ligase (425 aa).

230–232 (TAE) is a binding site for L-serine. 261–263 (RSE) contributes to the ATP binding site. L-serine is bound at residue Glu-284. 348-351 (EISS) contacts ATP. Position 384 (Ser-384) interacts with L-serine.

This sequence belongs to the class-II aminoacyl-tRNA synthetase family. Type-1 seryl-tRNA synthetase subfamily. In terms of assembly, homodimer. The tRNA molecule binds across the dimer.

Its subcellular location is the cytoplasm. The catalysed reaction is tRNA(Ser) + L-serine + ATP = L-seryl-tRNA(Ser) + AMP + diphosphate + H(+). It catalyses the reaction tRNA(Sec) + L-serine + ATP = L-seryl-tRNA(Sec) + AMP + diphosphate + H(+). It participates in aminoacyl-tRNA biosynthesis; selenocysteinyl-tRNA(Sec) biosynthesis; L-seryl-tRNA(Sec) from L-serine and tRNA(Sec): step 1/1. In terms of biological role, catalyzes the attachment of serine to tRNA(Ser). Is also able to aminoacylate tRNA(Sec) with serine, to form the misacylated tRNA L-seryl-tRNA(Sec), which will be further converted into selenocysteinyl-tRNA(Sec). The protein is Serine--tRNA ligase of Streptococcus pyogenes serotype M3 (strain SSI-1).